We begin with the raw amino-acid sequence, 54 residues long: Hydrophobic protein RCI2B (54 aa).

2 helical membrane-spanning segments follow: residues 2–22 (STAT…GVFL) and 32–52 (ICLI…LYII).

The protein belongs to the UPF0057 (PMP3) family.

It localises to the membrane. This is Hydrophobic protein RCI2B (RCI2B) from Arabidopsis thaliana (Mouse-ear cress).